A 263-amino-acid polypeptide reads, in one-letter code: Granzyme K (263 aa).

Residues 1–21 form the signal peptide; the sequence is MRFSSWALVSLVAGVYMSSEC. A propeptide spans 22–25 (activation peptide); it reads FHTE. Residues 26–258 enclose the Peptidase S1 domain; sequence IIGGREVQPH…YQTWIKSKLA (233 aa). Cys-51 and Cys-67 form a disulfide bridge. Residues His-66 and Asp-115 each act as charge relay system in the active site. 3 disulfides stabilise this stretch: Cys-148–Cys-219, Cys-180–Cys-198, and Cys-209–Cys-233. The active-site Charge relay system is the Ser-213.

This sequence belongs to the peptidase S1 family. Granzyme subfamily.

It is found in the cytoplasmic granule. This is Granzyme K (Gzmk) from Mus musculus (Mouse).